We begin with the raw amino-acid sequence, 1976 residues long: Myosin-10 (1976 aa).

Arg18 bears the Omega-N-methylarginine mark. The 51-residue stretch at 31–81 folds into the Myosin N-terminal SH3-like domain; the sequence is TAKKLVWIPSERHGFEAASIKEERGDEVMVELAENGKKAMVNKDDIQKMNP. A Myosin motor domain is found at 85-783; sequence SKVEDMAELT…VLAHLEEERD (699 aa). 178–185 is a binding site for ATP; that stretch reads GESGAGKT. At Lys442 the chain carries N6-acetyllysine. Positions 661–683 are actin-binding; sequence LTKLMATLRNTNPNFVRCIIPNH. An IQ domain is found at 786 to 815; it reads ITDIIIFFQAVCRGYLARKAFAKKQQQLSA. A coiled-coil region spans residues 845–1976; it reads LQVTRQEEEL…VNETQPPQSE (1132 aa). The tract at residues 1125-1175 is disordered; that stretch reads EDFESEKASRNKAEKQKRDLSEELEALKTELEDTLDTTAAQQELRTKREQE. The segment covering 1129 to 1155 has biased composition (basic and acidic residues); sequence SEKASRNKAEKQKRDLSEELEALKTEL. Ser1145 is subject to Phosphoserine. Residues Lys1241, Lys1301, and Lys1645 each carry the N6-acetyllysine modification. Disordered regions lie at residues 1697–1718 and 1874–1976; these read ASSE…DEIA and KANA…PQSE. The span at 1698–1708 shows a compositional bias: basic and acidic residues; it reads SSERARRHAEQ. At Arg1930 the chain carries Omega-N-methylarginine. Ser1935, Ser1937, Ser1938, and Ser1939 each carry phosphoserine. The residue at position 1940 (Arg1940) is an Omega-N-methylarginine. Ser1952 and Ser1956 each carry phosphoserine. Phosphothreonine is present on Thr1960. Residues 1967-1976 are compositionally biased toward polar residues; that stretch reads VNETQPPQSE. A Phosphoserine modification is found at Ser1975.

It belongs to the TRAFAC class myosin-kinesin ATPase superfamily. Myosin family. As to quaternary structure, myosin is a hexameric protein that consists of 2 heavy chain subunits (MHC), 2 alkali light chain subunits (MLC) and 2 regulatory light chain subunits (MLC-2). Interacts with PLEKHG6. Interacts with ECPAS. Interacts with KIF26B. Interacts with LARP6. Interacts with MCC. Interacts with CFAP95. Post-translationally, phosphorylated by ABL2.

It localises to the cell projection. It is found in the lamellipodium. Its function is as follows. Involved with LARP6 in the stabilization of type I collagen mRNAs for CO1A1 and CO1A2. During cell spreading, plays an important role in cytoskeleton reorganization, focal contacts formation (in the central part but not the margins of spreading cells), and lamellipodial extension; this function is mechanically antagonized by MYH9. Cellular myosin that appears to play a role in cytokinesis, cell shape, and specialized functions such as secretion and capping. The polypeptide is Myosin-10 (Myh10) (Rattus norvegicus (Rat)).